The primary structure comprises 393 residues: Probable acetyl-CoA acyltransferase (393 aa).

The Acyl-thioester intermediate role is filled by Cys88. Catalysis depends on proton acceptor residues His349 and Cys378.

The protein belongs to the thiolase-like superfamily. Thiolase family.

It is found in the cytoplasm. It catalyses the reaction 2 acetyl-CoA = acetoacetyl-CoA + CoA. The chain is Probable acetyl-CoA acyltransferase from Staphylococcus aureus (strain Mu50 / ATCC 700699).